We begin with the raw amino-acid sequence, 529 residues long: Phenylalanine N-monooxygenase (529 aa).

Residues 1 to 21 (MLDSTPMLAFIIGLLLLALTM) form a helical membrane-spanning segment. Residue Cys-467 participates in heme binding.

This sequence belongs to the cytochrome P450 family. Heme serves as cofactor.

It is found in the endoplasmic reticulum membrane. The enzyme catalyses L-phenylalanine + 2 reduced [NADPH--hemoprotein reductase] + 2 O2 = (E)-phenylacetaldehyde oxime + 2 oxidized [NADPH--hemoprotein reductase] + CO2 + 3 H2O + 2 H(+). The protein operates within secondary metabolite biosynthesis; phenylglucosinolate biosynthesis. Its function is as follows. Converts L-phenylalanine into phenylacetaldoxime, the precursor of benzylglucosinolate (glucotropeolin). The polypeptide is Phenylalanine N-monooxygenase (CYP79A2) (Arabidopsis thaliana (Mouse-ear cress)).